The primary structure comprises 336 residues: tRNA N6-adenosine threonylcarbamoyltransferase (336 aa).

Positions 111 and 115 each coordinate Fe cation. Substrate contacts are provided by residues 134 to 138 (LVSGG), aspartate 167, glycine 180, and asparagine 270. Position 298 (aspartate 298) interacts with Fe cation.

This sequence belongs to the KAE1 / TsaD family. Requires Fe(2+) as cofactor.

Its subcellular location is the cytoplasm. The enzyme catalyses L-threonylcarbamoyladenylate + adenosine(37) in tRNA = N(6)-L-threonylcarbamoyladenosine(37) in tRNA + AMP + H(+). In terms of biological role, required for the formation of a threonylcarbamoyl group on adenosine at position 37 (t(6)A37) in tRNAs that read codons beginning with adenine. Is involved in the transfer of the threonylcarbamoyl moiety of threonylcarbamoyl-AMP (TC-AMP) to the N6 group of A37, together with TsaE and TsaB. TsaD likely plays a direct catalytic role in this reaction. This Acinetobacter baumannii (strain AB307-0294) protein is tRNA N6-adenosine threonylcarbamoyltransferase.